The sequence spans 380 residues: Oocyte-specific homeobox protein 4 (380 aa).

5 disordered regions span residues methionine 1 to valine 25, valine 43 to arginine 95, lysine 152 to serine 182, proline 234 to proline 303, and threonine 339 to tyrosine 380. Residues valine 43 to histidine 53 show a composition bias toward polar residues. Basic and acidic residues predominate over residues serine 54–glutamate 67. Residues cysteine 94–serine 153 constitute a DNA-binding region (homeobox). Basic and acidic residues predominate over residues proline 234–serine 250. The segment covering serine 260–serine 271 has biased composition (low complexity). Composition is skewed to polar residues over residues leucine 278 to threonine 302 and asparagine 351 to tyrosine 380.

It belongs to the paired homeobox family. Obox subfamily. In terms of tissue distribution, specifically expressed in early embryos.

Its subcellular location is the nucleus. In terms of biological role, transcription factor required for zygotic genome activation (ZGA), a critical event in early embryonic development during which the developmental control passes from maternally provided mRNAs to the expression of the zygotic genome after fertilization. Cannot compensate for loss of other members of the Obox family, suggesting that its function differs from other Obox family members. May regulate expression of histone genes in embryonic stem cells. Also involved in completion of meiosis of oocytes during the meiosis-I/meiosis-II transition. Required to maintain the nuclear membrane of the germinal vesicle in oocytes. This chain is Oocyte-specific homeobox protein 4, found in Mus musculus (Mouse).